The sequence spans 178 residues: Peptide deformylase (178 aa).

Positions 102 and 144 each coordinate Fe cation. Glu145 is an active-site residue. His148 is a Fe cation binding site.

The protein belongs to the polypeptide deformylase family. Requires Fe(2+) as cofactor.

It catalyses the reaction N-terminal N-formyl-L-methionyl-[peptide] + H2O = N-terminal L-methionyl-[peptide] + formate. Its function is as follows. Removes the formyl group from the N-terminal Met of newly synthesized proteins. Requires at least a dipeptide for an efficient rate of reaction. N-terminal L-methionine is a prerequisite for activity but the enzyme has broad specificity at other positions. The polypeptide is Peptide deformylase (Leptospira interrogans serogroup Icterohaemorrhagiae serovar copenhageni (strain Fiocruz L1-130)).